The primary structure comprises 280 residues: Phosphatidylglycerol--prolipoprotein diacylglyceryl transferase (280 aa).

4 consecutive transmembrane segments (helical) span residues 30–50 (WYGL…RRIV), 71–91 (FLLW…ILFY), 106–126 (IWNG…AMII), and 132–152 (AIPI…GLFF). Arg-154 contributes to the a 1,2-diacyl-sn-glycero-3-phospho-(1'-sn-glycerol) binding site. The next 3 helical transmembrane spans lie at 188 to 208 (QLYE…WFVY), 217 to 237 (GLVT…VEFF), and 251 to 271 (WLTM…WAIA).

Belongs to the Lgt family.

It is found in the cell inner membrane. It catalyses the reaction L-cysteinyl-[prolipoprotein] + a 1,2-diacyl-sn-glycero-3-phospho-(1'-sn-glycerol) = an S-1,2-diacyl-sn-glyceryl-L-cysteinyl-[prolipoprotein] + sn-glycerol 1-phosphate + H(+). Its pathway is protein modification; lipoprotein biosynthesis (diacylglyceryl transfer). Its function is as follows. Catalyzes the transfer of the diacylglyceryl group from phosphatidylglycerol to the sulfhydryl group of the N-terminal cysteine of a prolipoprotein, the first step in the formation of mature lipoproteins. The protein is Phosphatidylglycerol--prolipoprotein diacylglyceryl transferase of Sinorhizobium medicae (strain WSM419) (Ensifer medicae).